We begin with the raw amino-acid sequence, 793 residues long: Ent-copalyl diphosphate synthase, chloroplastic (793 aa).

A chloroplast-targeting transit peptide spans 1–47 (MPLASNPVAFLPSSTAHGDLPAAAFSRSSAGCLQLCRPLTPTSSLQC). 2 residues coordinate Mg(2+): Asp-372 and Asp-374. A DXDD motif motif is present at residues 372–375 (DIDD).

This sequence belongs to the terpene synthase family. It depends on Mg(2+) as a cofactor.

It localises to the plastid. The protein resides in the chloroplast. It carries out the reaction (2E,6E,10E)-geranylgeranyl diphosphate = ent-copalyl diphosphate. It functions in the pathway plant hormone biosynthesis; gibberellin biosynthesis. Its function is as follows. Catalyzes the conversion of geranylgeranyl diphosphate (GGPP) to the gibberellin precursor ent-copalyl diphosphate (CPP). In Salvia miltiorrhiza (Chinese sage), this protein is Ent-copalyl diphosphate synthase, chloroplastic.